Reading from the N-terminus, the 302-residue chain is Protein FdhE homolog (302 aa).

This sequence belongs to the FdhE family.

Its subcellular location is the cytoplasm. Its function is as follows. Necessary for formate dehydrogenase activity. This Shewanella sp. (strain MR-4) protein is Protein FdhE homolog.